A 632-amino-acid chain; its full sequence is Thioredoxin domain-containing protein C959.05c (632 aa).

Positions 1–22 are cleaved as a signal peptide; that stretch reads MKLFLYHFTFIVYYFIISFSYA. 3 N-linked (GlcNAc...) asparagine glycosylation sites follow: asparagine 35, asparagine 41, and asparagine 140. Residues 153-284 form the Thioredoxin domain; that stretch reads SDSSSTDPAF…LLSYSNQVAS (132 aa). The cysteines at positions 209 and 212 are disulfide-linked. Residue asparagine 557 is glycosylated (N-linked (GlcNAc...) asparagine). A helical membrane pass occupies residues 583–603; that stretch reads LIVFNLLIALLILSILTIISA.

The protein belongs to the protein disulfide isomerase family.

The protein localises to the endoplasmic reticulum membrane. It carries out the reaction Catalyzes the rearrangement of -S-S- bonds in proteins.. Its function is as follows. Acts as a membrane-bound chaperone in endoplasmic reticulum quality control. Probably facilitates presentation of substrate to membrane-bound components of the degradation machinery. This Schizosaccharomyces pombe (strain 972 / ATCC 24843) (Fission yeast) protein is Thioredoxin domain-containing protein C959.05c.